A 577-amino-acid chain; its full sequence is Optineurin (577 aa).

Disordered stretches follow at residues 1-32 (MSHQPLSCLTEKEDSPSESTGNGPPHLAHPNL) and 101-143 (SHEN…KDQL). A coiled-coil region spans residues 38 to 170 (EELLQQMKEL…VSELQLKLNS (133 aa)). The interval 58–209 (MKLNNQAMKG…GPTRTVSTGT (152 aa)) is interaction with Rab8. An LIR motif is present at residues 176-181 (DSFVEI). A Phosphoserine; by TBK1 modification is found at Ser-177. Residues 186-197 (GEAEGSVKEIKH) show a composition bias toward basic and acidic residues. Disordered regions lie at residues 186-209 (GEAEGSVKEIKHSPGPTRTVSTGT) and 261-297 (VSDFEKKTSNRSEIETQTEGSTEKENDEEKGPETVGS). Ser-198 is modified (phosphoserine). Positions 239-508 (CLREGNQKVE…LLKENDAFED (270 aa)) form a coiled coil. Basic and acidic residues-rich tracts occupy residues 261–274 (VSDFEKKTSNRSEI) and 281–292 (STEKENDEEKGP). Ser-342 carries the phosphoserine modification. The tract at residues 411–577 (TRKESEKVDR…LQIHVMDCII (167 aa)) is interaction with HD. An interaction with MYO6 region spans residues 412–520 (RKESEKVDRA…RQSLMEMQSR (109 aa)). A UBAN motif is present at residues 474 to 479 (DFHAER). Residue Ser-526 is modified to Phosphoserine. A CCHC NOA-type zinc finger spans residues 547–577 (QRNIPIHSCPKCGEVLPDIDTLQIHVMDCII). The Zn(2+) site is built by Cys-555, Cys-558, His-571, and Cys-575.

In terms of assembly, self-associates. Interacts with HD. Interacts with GTF3A. Interacts with MYO6. Interacts (via UBAN) with ubiquitinated TFRC. Interacts with GTP-bound Rab8 (RAB8A and/or RAB8B). Interacts with TBC1D17. Interacts with TBK1. Interacts with TRAF3. Binds to linear ubiquitin chains. Interacts with LC3 family members MAP1LC3A, MAP1LC3B, GABARAP, GABARAPL1 and GABARAPL2; OPTN phosphorylation increases the association (at least with MAP1LC3B). Interacts with RAB12; the interaction may be indirect. Interacts with TBK1; this interaction leads to the Golgi localization of TBK1 and its subsequent activation. Interacts with palmitoyltransferase ZDHHC17/HIP14; the interaction does not lead to palmitoylation of OPTN. Interacts with CYLD. Interacts with TOM1; the interaction is indirect and is mediated by MYO6, which acts as a bridge between TOM1 and OPTN. Interacts with USP12; the interaction is independent of USP12 deubiquitinase activity and may be involved in regulation of autophagic flux. (Microbial infection) Interacts with E3 14.7 kDa protein of group C human adenovirus. Interacts with Bluetongue virus protein NS3. Post-translationally, phosphorylated by TBK1, leading to restrict bacterial proliferation in case of infection. Phosphorylation is induced by phorbol esters and decreases its half-time. As to expression, present in aqueous humor of the eye (at protein level). Expressed in the trabecular meshwork (at protein level). Expressed in nonpigmented ciliary epithelium (at protein level). Expressed at high levels in skeletal muscle, also detected in heart, brain, pancreas, kidney, placenta and liver. Expressed in dermal fibroblasts (at protein level).

It localises to the cytoplasm. Its subcellular location is the perinuclear region. The protein resides in the golgi apparatus. The protein localises to the trans-Golgi network. It is found in the cytoplasmic vesicle. It localises to the autophagosome. Its subcellular location is the recycling endosome. Functionally, plays an important role in the maintenance of the Golgi complex, in membrane trafficking, in exocytosis, through its interaction with myosin VI and Rab8. Links myosin VI to the Golgi complex and plays an important role in Golgi ribbon formation. Plays a role in the activation of innate immune response during viral infection. Mechanistically, recruits TBK1 at the Golgi apparatus, promoting its trans-phosphorylation after RLR or TLR3 stimulation. In turn, activated TBK1 phosphorylates its downstream partner IRF3 to produce IFN-beta/IFNB1. Plays a neuroprotective role in the eye and optic nerve. May act by regulating membrane trafficking and cellular morphogenesis via a complex that contains Rab8 and huntingtin (HD). Mediates the interaction of Rab8 with the probable GTPase-activating protein TBC1D17 during Rab8-mediated endocytic trafficking, such as that of transferrin receptor (TFRC/TfR); regulates Rab8 recruitment to tubules emanating from the endocytic recycling compartment. Autophagy receptor that interacts directly with both the cargo to become degraded and an autophagy modifier of the MAP1 LC3 family; targets ubiquitin-coated bacteria (xenophagy), such as cytoplasmic Salmonella enterica, and appears to function in the same pathway as SQSTM1 and CALCOCO2/NDP52. (Microbial infection) May constitute a cellular target for various viruses, such as adenovirus E3 14.7 or Bluetongue virus, to inhibit innate immune response. During RNA virus infection, such as that of Sendai virus, negatively regulates the induction of IFNB1. The polypeptide is Optineurin (OPTN) (Homo sapiens (Human)).